A 213-amino-acid polypeptide reads, in one-letter code: MSQKVLPTKINLIQFRRQLRLITVIKRLLENKREVLLLYLRTYASEYEKIYNEVNEEMKKVYESYLQAVASEGISNIEEIALSQKPSLEVSSSIKVIFGVKVPTIKLDKSTIPPKPFSDVETSPYLSESYEEMTEALNKIIELVELESTIRSLVSELRKTQRLINSIDNYILPFYRGSIKFIKQILEDRQREEFSRLKIIRRILQRRRESGSG.

Belongs to the V-ATPase D subunit family. Has multiple subunits with at least A(3), B(3), C, D, E, F, H, I and proteolipid K(x).

It is found in the cell membrane. Component of the A-type ATP synthase that produces ATP from ADP in the presence of a proton gradient across the membrane. This chain is A-type ATP synthase subunit D, found in Saccharolobus islandicus (strain L.S.2.15 / Lassen #1) (Sulfolobus islandicus).